Here is a 472-residue protein sequence, read N- to C-terminus: 3-isopropylmalate dehydratase large subunit (472 aa).

The interval 61–80 (TPDHNVPTTQKERASGVEGI) is disordered. C353, C414, and C417 together coordinate [4Fe-4S] cluster.

This sequence belongs to the aconitase/IPM isomerase family. LeuC type 1 subfamily. As to quaternary structure, heterodimer of LeuC and LeuD. It depends on [4Fe-4S] cluster as a cofactor.

The enzyme catalyses (2R,3S)-3-isopropylmalate = (2S)-2-isopropylmalate. It functions in the pathway amino-acid biosynthesis; L-leucine biosynthesis; L-leucine from 3-methyl-2-oxobutanoate: step 2/4. Its function is as follows. Catalyzes the isomerization between 2-isopropylmalate and 3-isopropylmalate, via the formation of 2-isopropylmaleate. In Saccharophagus degradans (strain 2-40 / ATCC 43961 / DSM 17024), this protein is 3-isopropylmalate dehydratase large subunit.